Here is a 222-residue protein sequence, read N- to C-terminus: uncharacterized protein (222 aa).

It belongs to the ycf73 family.

It is found in the plastid. Its subcellular location is the chloroplast. This is an uncharacterized protein from Oryza nivara (Indian wild rice).